The chain runs to 236 residues: Small ribosomal subunit protein uS2c (236 aa).

It belongs to the universal ribosomal protein uS2 family.

The protein localises to the plastid. It is found in the chloroplast. In Chloranthus spicatus (Chulantree), this protein is Small ribosomal subunit protein uS2c (rps2).